The following is a 308-amino-acid chain: Cobalamin biosynthesis protein CobD (308 aa).

A run of 6 helical transmembrane segments spans residues 1 to 21 (MEIL…GDPP), 50 to 70 (FVYG…PVYF), 71 to 91 (LLDW…AILF), 151 to 171 (IGDG…PGVM), 202 to 222 (VLNF…SFFG), and 284 to 304 (LVLI…VIYF).

This sequence belongs to the CobD/CbiB family.

Its subcellular location is the cell membrane. It functions in the pathway cofactor biosynthesis; adenosylcobalamin biosynthesis. Converts cobyric acid to cobinamide by the addition of aminopropanol on the F carboxylic group. The sequence is that of Cobalamin biosynthesis protein CobD from Dehalococcoides mccartyi (strain CBDB1).